Reading from the N-terminus, the 366-residue chain is MSGSTLGKLFCVTVFGESHGPAIGCVVDGCPPGMTLGESDIQHDLDRRKPGTSRHVTQRRESDTAEILSGVYEGRTTGTPIALLIRNEDQRSKDYGNIAATFRPGHADYTYTQKYGFRDPRGGGRSSARLTAPIVGAGAIAKKWLKEKYGIVIRGYMSALGPLDIPFESWDEVDNNAFFSPNAAIVPELEQYMDALRKSGDSVGARVSVVAENVPPGWGEPLYDKLDADLAHALMGLNAVKGVEIGDGMQAARQLGTEHRDEITPAGFLSNHAGGVLGGISSGQAIVAHVAIKPTSSMRLPGRSVDLDGQPIEVVTHGRHDPCVGIRATPIVEALTAIVLMDHALRHRAQCGDVASGVPIVPARLD.

2 residues coordinate NADP(+): arginine 48 and arginine 54. Residues 125-127 (RSS), 238-239 (NA), glycine 278, 293-297 (KPTSS), and arginine 319 contribute to the FMN site.

This sequence belongs to the chorismate synthase family. As to quaternary structure, homotetramer. The cofactor is FMNH2.

The enzyme catalyses 5-O-(1-carboxyvinyl)-3-phosphoshikimate = chorismate + phosphate. It functions in the pathway metabolic intermediate biosynthesis; chorismate biosynthesis; chorismate from D-erythrose 4-phosphate and phosphoenolpyruvate: step 7/7. In terms of biological role, catalyzes the anti-1,4-elimination of the C-3 phosphate and the C-6 proR hydrogen from 5-enolpyruvylshikimate-3-phosphate (EPSP) to yield chorismate, which is the branch point compound that serves as the starting substrate for the three terminal pathways of aromatic amino acid biosynthesis. This reaction introduces a second double bond into the aromatic ring system. In Thiobacillus denitrificans (strain ATCC 25259 / T1), this protein is Chorismate synthase.